Consider the following 205-residue polypeptide: dITP/XTP pyrophosphatase (205 aa).

Thr-11–Lys-16 lines the substrate pocket. 2 residues coordinate Mg(2+): Glu-44 and Asp-73. Asp-73 functions as the Proton acceptor in the catalytic mechanism. Residues Ser-74, Phe-158–Asp-161, Lys-181, and His-186–Arg-187 each bind substrate.

The protein belongs to the HAM1 NTPase family. As to quaternary structure, homodimer. It depends on Mg(2+) as a cofactor.

It catalyses the reaction XTP + H2O = XMP + diphosphate + H(+). The enzyme catalyses dITP + H2O = dIMP + diphosphate + H(+). It carries out the reaction ITP + H2O = IMP + diphosphate + H(+). Pyrophosphatase that catalyzes the hydrolysis of nucleoside triphosphates to their monophosphate derivatives, with a high preference for the non-canonical purine nucleotides XTP (xanthosine triphosphate), dITP (deoxyinosine triphosphate) and ITP. Seems to function as a house-cleaning enzyme that removes non-canonical purine nucleotides from the nucleotide pool, thus preventing their incorporation into DNA/RNA and avoiding chromosomal lesions. The protein is dITP/XTP pyrophosphatase of Bacillus thuringiensis subsp. konkukian (strain 97-27).